A 226-amino-acid polypeptide reads, in one-letter code: Probable chemoreceptor glutamine deamidase CheD (226 aa).

The interval 207–226 (PGGMRVERFDTPSRRDPVGA) is disordered.

Belongs to the CheD family.

The catalysed reaction is L-glutaminyl-[protein] + H2O = L-glutamyl-[protein] + NH4(+). Functionally, probably deamidates glutamine residues to glutamate on methyl-accepting chemotaxis receptors (MCPs), playing an important role in chemotaxis. The polypeptide is Probable chemoreceptor glutamine deamidase CheD (Bordetella bronchiseptica (strain ATCC BAA-588 / NCTC 13252 / RB50) (Alcaligenes bronchisepticus)).